The following is a 160-amino-acid chain: uncharacterized protein (160 aa).

Residues 7 to 151 (LLINFKTLEE…NPYIWHPDMD (145 aa)) form the N-acetyltransferase domain.

This is an uncharacterized protein from Bacillus velezensis (strain DSM 23117 / BGSC 10A6 / LMG 26770 / FZB42) (Bacillus amyloliquefaciens subsp. plantarum).